The chain runs to 177 residues: Protein CutA 1, chloroplastic (177 aa).

The transit peptide at 1–60 directs the protein to the chloroplast; it reads MPLLPSPLGSLSAAATAAPRRAAAAAGLSPLLLRRRAPIAGALLFLSLGAFAGVRSLSSS.

The protein belongs to the CutA family. As to quaternary structure, homotrimer.

The protein localises to the plastid. The protein resides in the chloroplast. This chain is Protein CutA 1, chloroplastic (CUTA1), found in Oryza sativa subsp. japonica (Rice).